The chain runs to 283 residues: MCNTPTYCDLGKAAKDVFNKGYGFGMVKIDLRTKSCSGVEFSTSGHAYTDTGKASGNLETKYKICDHGLTFTQKWNTDNTLGTEISLENKLAEGLKLTLDTIFVPNTGKKSGKLKASYKRECFSIGSNVDIDFAGPTIYGWAVLALEGWLAGYQMSFDTAKSKLSQNNFALGYKAADFQLHTHVNDGTEFGGSIYQKVNEKIETSINLAWTAGSNNTRFGIAAKYKLDCRTSLSAKVNNASLIGLGYTQTLRPGVKLTLSALIDGKNFSAGGHKVGLGFELEA.

Cysteine 2 bears the N-acetylcysteine mark. Threonine 4 is subject to Phosphothreonine. Lysine 12, lysine 15, and lysine 20 each carry N6-acetyllysine. 2 beta stranded membrane passes run 26-35 and 39-47; these read MVKIDLRTKS and VEFSTSGHA. Lysine 53 participates in a covalent cross-link: Glycyl lysine isopeptide (Lys-Gly) (interchain with G-Cter in ubiquitin). Beta stranded transmembrane passes span 54–64, 69–76, and 80–89; these read ASGNLETKYKI, LTFTQKWN, and TLGTEISLEN. Residue lysine 90 is modified to N6-acetyllysine. A beta stranded transmembrane segment spans residues 95–104; that stretch reads LKLTLDTIFV. Glycyl lysine isopeptide (Lys-Gly) (interchain with G-Cter in ubiquitin) cross-links involve residues lysine 109 and lysine 110. A run of 10 beta stranded transmembrane segments spans residues 111 to 120, 123 to 130, 137 to 145, 150 to 158, 163 to 175, 178 to 185, 189 to 198, 202 to 211, 218 to 227, and 231 to 238; these read SGKLKASYKR, FSIGSNVD, TIYGWAVLA, LAGYQMSFD, KLSQNNFALGYKA, FQLHTHVN, EFGGSIYQKV, IETSINLAWT, RFGIAAKYKL, and TSLSAKVN. A Phosphoserine modification is found at serine 241. NAD(+) is bound by residues 242 to 244 and 260 to 264; these read LIG and SALID. A run of 2 beta stranded transmembrane segments spans residues 242–251 and 254–263; these read LIGLGYTQTL and GVKLTLSALI. Lysine 266 is subject to N6-acetyllysine; alternate. Lysine 266 participates in a covalent cross-link: Glycyl lysine isopeptide (Lys-Gly) (interchain with G-Cter in ubiquitin); alternate. A beta stranded transmembrane segment spans residues 273-282; sequence HKVGLGFELE.

The protein belongs to the eukaryotic mitochondrial porin family. In terms of assembly, interacts with ARMC12 in a TBC1D21-dependent manner. Interacts with MISFA. Ubiquitinated by PRKN during mitophagy, leading to its degradation and enhancement of mitophagy. Deubiquitinated by USP30.

It is found in the mitochondrion outer membrane. The protein resides in the membrane. The enzyme catalyses chloride(in) = chloride(out). It carries out the reaction K(+)(in) = K(+)(out). Functionally, non-selective voltage-gated ion channel that mediates the transport of anions and cations through the mitochondrion outer membrane and plasma membrane. Forms a high-conducting channel with a stable open state and a voltage-induced closure with a mild preference for anions over cations. Involved in male fertility and sperm mitochondrial sheath formation. The protein is Non-selective voltage-gated ion channel VDAC3 of Sus scrofa (Pig).